Reading from the N-terminus, the 376-residue chain is 1-acyl-sn-glycerol-3-phosphate acyltransferase gamma (376 aa).

Over 1 to 124 the chain is Cytoplasmic; it reads MGLLAFLKTQ…LGSSKVLAKK (124 aa). The HXXXXD motif signature appears at 96–101; the sequence is HNFEID. Residues 125-145 traverse the membrane as a helical segment; sequence ELLYVPLIGWTWYFLEIVFCK. Residues 146 to 316 lie on the Lumenal side of the membrane; sequence RKWEEDRDTV…TLLNFLSWAT (171 aa). A helical transmembrane segment spans residues 317–339; sequence ILLSPLFSFVLGVFASGSPLLIL. The Cytoplasmic portion of the chain corresponds to 340–376; sequence TFLGFVGAASFGVRRLIGVTEIEKGSSYGNQEFKKKE.

It belongs to the 1-acyl-sn-glycerol-3-phosphate acyltransferase family.

Its subcellular location is the endoplasmic reticulum membrane. The protein localises to the nucleus envelope. It catalyses the reaction a 1-acyl-sn-glycero-3-phosphate + an acyl-CoA = a 1,2-diacyl-sn-glycero-3-phosphate + CoA. The catalysed reaction is pentadecanoyl-CoA + 1-(9Z-octadecenoyl)-sn-glycero-3-phosphate = 1-(9Z)-octadecenoyl-2-pentadecanoyl-sn-glycero-3-phosphate + CoA. It carries out the reaction heptadecanoyl-CoA + 1-(9Z-octadecenoyl)-sn-glycero-3-phosphate = 1-(9Z)-octadecenoyl-2-heptadecanoyl-sn-glycero-3-phosphate + CoA. The enzyme catalyses 1-(9Z-octadecenoyl)-sn-glycero-3-phosphate + octadecanoyl-CoA = 1-(9Z-octadecenoyl)-2-octadecanoyl-sn-glycero-3-phosphate + CoA. It catalyses the reaction nonadecanoyl-CoA + 1-(9Z-octadecenoyl)-sn-glycero-3-phosphate = 1-(9Z)-octadecenoyl-2-nonadecanoyl-sn-glycero-3-phosphate + CoA. The catalysed reaction is 1-(9Z-octadecenoyl)-sn-glycero-3-phosphate + (5Z,8Z,11Z,14Z)-eicosatetraenoyl-CoA = 1-(9Z)-octadecenoyl-2-(5Z,8Z,11Z,14Z)-eicosatetraenoyl-sn-glycero-3-phosphate + CoA. It carries out the reaction 1-(9Z-octadecenoyl)-sn-glycero-3-phosphate + (9Z)-octadecenoyl-CoA = 1,2-di-(9Z-octadecenoyl)-sn-glycero-3-phosphate + CoA. The enzyme catalyses 1-(9Z-octadecenoyl)-sn-glycero-3-phosphate + (9Z,12Z)-octadecadienoyl-CoA = 1-(9Z)-octadecenoyl-2-(9Z,12Z)-octadecadienoyl-sn-glycero-3-phosphate + CoA. It catalyses the reaction 1-(9Z-octadecenoyl)-sn-glycero-3-phosphocholine + (5Z,8Z,11Z,14Z)-eicosatetraenoyl-CoA = 1-(9Z)-octadecenoyl-2-(5Z,8Z,11Z,14Z)-icosatetraenoyl-sn-glycero-3-phosphocholine + CoA. The catalysed reaction is 1-(9Z-octadecenoyl)-sn-glycero-3-phospho-(1D-myo-inositol) + (5Z,8Z,11Z,14Z)-eicosatetraenoyl-CoA = 1-(9Z-octadecenoyl)-2-(5Z,8Z,11Z,14Z-eicosatetraenoyl)-sn-glycero-3-phospho-1D-myo-inositol + CoA. It carries out the reaction 1-(9Z-octadecenoyl)-sn-glycero-3-phospho-L-serine + (5Z,8Z,11Z,14Z)-eicosatetraenoyl-CoA = 1-(9Z-octadecenoyl)-2-(5Z,8Z,11Z,14Z-eicosatetraenoyl)-sn-glycero-3-phospho-L-serine + CoA. The enzyme catalyses 1-hexadecanoyl-sn-glycero-3-phosphate + (9Z)-octadecenoyl-CoA = 1-hexadecanoyl-2-(9Z-octadecenoyl)-sn-glycero-3-phosphate + CoA. It catalyses the reaction 1-hexadecanoyl-sn-glycero-3-phosphate + (5Z,8Z,11Z,14Z)-eicosatetraenoyl-CoA = 1-hexadecanoyl-2-(5Z,8Z,11Z,14Z-eicosatetraenoyl)-sn-glycero-3-phosphate + CoA. The catalysed reaction is 1-heptadecanoyl-sn-glycero-3-phosphate + (5Z,8Z,11Z,14Z)-eicosatetraenoyl-CoA = 1-heptadecanoyl-2-(5Z,8Z,11Z,14Z)-eicosatetraenoyl-sn-glycero-3-phosphate + CoA. It carries out the reaction 1-octadecanoyl-sn-glycero-3-phosphate + (9Z)-octadecenoyl-CoA = 1-octadecanoyl-2-(9Z-octadecenoyl)-sn-glycero-3-phosphate + CoA. The enzyme catalyses 1-octadecanoyl-sn-glycero-3-phosphate + (5Z,8Z,11Z,14Z)-eicosatetraenoyl-CoA = 1-octadecanoyl-2-(5Z,8Z,11Z,14Z-eicosatetraenoyl)-sn-glycero-3-phosphate + CoA. It catalyses the reaction 1-(9Z-octadecenoyl)-sn-glycero-3-phosphate + hexadecanoyl-CoA = 1-hexadecanoyl-2-(9Z-octadecenoyl)-sn-glycero-3-phosphate + CoA. The catalysed reaction is 1-O-(9Z-octadecenyl)-sn-glycero-3-phosphate + (5Z,8Z,11Z,14Z)-eicosatetraenoyl-CoA = 1-O-(9Z-octadecenyl)-2-(5Z,8Z,11Z,14Z-eicosatetraenoyl)-sn-glycero-3-phosphate + CoA. It carries out the reaction a 1-acyl-sn-glycero-3-phospho-(1D-myo-inositol) + (5Z,8Z,11Z,14Z)-eicosatetraenoyl-CoA = a 1-acyl-2-(5Z,8Z,11Z,14Z-eicosatetraenoyl)-sn-glycero-3-phospho-(1D-myo-inositol) + CoA. Its pathway is phospholipid metabolism; CDP-diacylglycerol biosynthesis; CDP-diacylglycerol from sn-glycerol 3-phosphate: step 2/3. Functionally, converts 1-acyl-sn-glycerol-3-phosphate (lysophosphatidic acid or LPA) into 1,2-diacyl-sn-glycerol-3-phosphate (phosphatidic acid or PA) by incorporating an acyl moiety at the sn-2 position of the glycerol backbone. Acts on LPA containing saturated or unsaturated fatty acids C16:0-C20:4 at the sn-1 position using C18:1, C20:4 or C18:2-CoA as the acyl donor. Also acts on lysophosphatidylcholine, lysophosphatidylinositol and lysophosphatidylserine using C18:1 or C20:4-CoA. Has a preference for arachidonoyl-CoA as a donor. Also has a modest lysophosphatidylinositol acyltransferase (LPIAT) activity, converts lysophosphatidylinositol (LPI) into phosphatidylinositol. This chain is 1-acyl-sn-glycerol-3-phosphate acyltransferase gamma (AGPAT3), found in Pongo abelii (Sumatran orangutan).